Here is a 332-residue protein sequence, read N- to C-terminus: MSTKEKLISHVMKEEPVGSRSKVTVVGVGMVGMASAISVLLKDLCDELALVDVMEEKLKGEVMDLQHGSLFLKTHKIVADKDYSVTANSKVVVVTAGARQQEGESRLNLVQRNVNIFKFIIPNIVKYSPNCIIMVVSNPVDILTYVAWKLSGFPRHRVIGSGTNLDSARFRHLMGEKLNIHPSSCHGWIVGEHGDSSVPVWSGVNVAGVSLQGLNPKMGVEGDSENWKAVHKQVVDGAYEVIRLKGYTSWAIGMSVADLVESIIKNLHKVHPVSTLVQGMHGVKDEVFMSIPCVLGNSGLTDVIHMTLKAEEEKQLVTSAETLWGVQKELTL.

NAD(+) is bound by residues 29–57 and R99; that span reads GMVGMASAISVLLKDLCDELALVDVMEEK. 3 residues coordinate substrate: R106, N138, and R169. Position 138 (N138) interacts with NAD(+). Residue H193 is the Proton acceptor of the active site. T248 contributes to the substrate binding site.

The protein belongs to the LDH/MDH superfamily. LDH family. As to quaternary structure, homotetramer.

Its subcellular location is the cytoplasm. The catalysed reaction is (S)-lactate + NAD(+) = pyruvate + NADH + H(+). Its pathway is fermentation; pyruvate fermentation to lactate; (S)-lactate from pyruvate: step 1/1. Its function is as follows. Interconverts simultaneously and stereospecifically pyruvate and lactate with concomitant interconversion of NADH and NAD(+). This chain is L-lactate dehydrogenase A chain (ldha), found in Lycodichthys dearborni (Antarctic eelpout).